Reading from the N-terminus, the 135-residue chain is Protein PsiE homolog (135 aa).

Helical transmembrane passes span 13–33 (VLQWILNIGLMALAAILVIFL), 54–74 (YMLVEGIVIYFLYFEFIALIV), 82–102 (HFPLRYFIYIGITAIIRLIIV), and 107–127 (PNDTLIYSFAILVLVIALYLA).

The protein belongs to the PsiE family.

The protein localises to the cell inner membrane. The polypeptide is Protein PsiE homolog (Edwardsiella ictaluri (strain 93-146)).